Consider the following 246-residue polypeptide: ATP synthase subunit a (246 aa).

5 helical membrane-spanning segments follow: residues 34–54 (GQTM…TFIG), 92–112 (WVPL…LGQL), 130–150 (DINT…YAGL), 155–175 (FGYF…VLEF), and 196–216 (VVAV…MILF).

It belongs to the ATPase A chain family. In terms of assembly, F-type ATPases have 2 components, CF(1) - the catalytic core - and CF(0) - the membrane proton channel. CF(1) has five subunits: alpha(3), beta(3), gamma(1), delta(1), epsilon(1). CF(0) has four main subunits: a, b, b' and c.

It localises to the cell inner membrane. In terms of biological role, key component of the proton channel; it plays a direct role in the translocation of protons across the membrane. The chain is ATP synthase subunit a from Gloeobacter violaceus (strain ATCC 29082 / PCC 7421).